We begin with the raw amino-acid sequence, 369 residues long: Glutamate 5-kinase (369 aa).

K9 contributes to the ATP binding site. 3 residues coordinate substrate: S49, D136, and N148. ATP-binding positions include T168 to D169 and T210 to K216. In terms of domain architecture, PUA spans R275 to W355.

Belongs to the glutamate 5-kinase family.

It localises to the cytoplasm. The enzyme catalyses L-glutamate + ATP = L-glutamyl 5-phosphate + ADP. It functions in the pathway amino-acid biosynthesis; L-proline biosynthesis; L-glutamate 5-semialdehyde from L-glutamate: step 1/2. In terms of biological role, catalyzes the transfer of a phosphate group to glutamate to form L-glutamate 5-phosphate. The sequence is that of Glutamate 5-kinase from Neisseria meningitidis serogroup B (strain ATCC BAA-335 / MC58).